The chain runs to 524 residues: MAHRQLYSYALQPSYAAAASTVSPAPPPPQQPLPPKTGLSSLYGSSADHYFPDTTYRFLARDGSEALSNYSGTLASSSSMYHHLPNTTASHLAYPQLLQHQEVAWPPGVEVPGAASAVEPLPPGVKRTSEALYYPTLLGAHNTIGQTEAWYTTDYFTKRPKLESTSHLPIYPQRAGEKDCTHYMQTRTCKFGESCRFDHPIWVPEGGIPDWKEAPVVPNEEYPERPGEPDCPYYIKTQRCKYGSKCKFNHPREEAAVSVETQDSLPERPSEPMCTFYMKTGKCKFGLSCKFHHPKDIQLPSSSQDIGSSVGLTSEPDATNNPHVTFTPALYHNSKGLPVRSGEVDCPFYLKTGSCKYGATCRYNHPERTAFIPQAAGVNYSLVSSNTANLNLGLVTPATSFYQTLTQPTLGVISATYPQRPGQSECDYYMKTGECKFGERCKFHHPADRLSAMTKQAPQQPNVKLSLAGYPRREGALNCPYYMKTGTCKYGATCKFDHPPPGEVMAKTTSEADAAGATNTDTTQ.

Residues Ala19 to Leu39 are disordered. The segment covering Pro24 to Pro35 has biased composition (pro residues). 3 C3H1-type zinc fingers span residues Arg174–Trp202, Arg225–Glu253, and Arg268–Asp296. Residues Pro300–Thr319 form a disordered region. 3 consecutive C3H1-type zinc fingers follow at residues Arg340 to Arg368, Arg420 to Asp448, and Arg473 to Pro501. A disordered region spans residues Met505–Gln524. Positions Ala512–Gln524 are enriched in low complexity.

In terms of assembly, interacts with HEN4. Interacts with FLK and PEP. As to expression, highly expressed in inflorescences, at intermediate levels in leaves and stems and at lower levels in roots.

The protein resides in the nucleus speckle. Functionally, involved in flower development. Functions in floral reproductive organ identity by binding AGAMOUS (AG) pre-mRNA and promoting its processing. Functions in association with HUA2 and HEN4. In Arabidopsis thaliana (Mouse-ear cress), this protein is Zinc finger CCCH domain-containing protein 37 (HUA1).